We begin with the raw amino-acid sequence, 314 residues long: Dihydropteroate synthase (314 aa).

Residues 10–294 form the Pterin-binding domain; it reads TVICGIINVT…DVASHRMAVE (285 aa). Asn17 is a binding site for Mg(2+). Residues Thr57, Asp91, Asn110, Asp201, Lys237, and 282 to 284 each bind (7,8-dihydropterin-6-yl)methyl diphosphate; that span reads RVH.

This sequence belongs to the DHPS family. As to quaternary structure, homodimer or homotrimer. It depends on Mg(2+) as a cofactor.

The enzyme catalyses (7,8-dihydropterin-6-yl)methyl diphosphate + 4-aminobenzoate = 7,8-dihydropteroate + diphosphate. It participates in cofactor biosynthesis; tetrahydrofolate biosynthesis; 7,8-dihydrofolate from 2-amino-4-hydroxy-6-hydroxymethyl-7,8-dihydropteridine diphosphate and 4-aminobenzoate: step 1/2. In terms of biological role, catalyzes the condensation of para-aminobenzoate (pABA) with 6-hydroxymethyl-7,8-dihydropterin diphosphate (DHPt-PP) to form 7,8-dihydropteroate (H2Pte), the immediate precursor of folate derivatives. The chain is Dihydropteroate synthase (sulA) from Streptococcus pneumoniae serotype 4 (strain ATCC BAA-334 / TIGR4).